Here is a 231-residue protein sequence, read N- to C-terminus: Ferredoxin-type protein NapG (231 aa).

Positions 1–41 (MSRSAKPQNGRRRFLRDVVRTAGGLAAVGVALGLQQQTARA) form a signal peptide, tat-type signal. 4Fe-4S ferredoxin-type domains are found at residues 50–81 (GAIN…LATL), 89–121 (TPYF…REIE), 130–166 (LAVL…LELE), and 177–208 (FLPT…VLPL). 16 residues coordinate [4Fe-4S] cluster: cysteine 61, cysteine 64, cysteine 67, cysteine 71, cysteine 99, cysteine 102, cysteine 107, cysteine 111, cysteine 139, cysteine 147, cysteine 150, cysteine 154, cysteine 186, cysteine 189, cysteine 192, and cysteine 196.

It depends on [4Fe-4S] cluster as a cofactor. In terms of processing, exported by the Tat system. The position of the signal peptide cleavage has not been experimentally proven.

It is found in the periplasm. In terms of biological role, required for electron transfer from ubiquinol, via NapC, to the periplasmic nitrate reductase NapAB complex. The protein is Ferredoxin-type protein NapG (napG) of Escherichia coli (strain K12).